Consider the following 82-residue polypeptide: Mitotic-spindle organizing protein 1 (82 aa).

A2 carries the N-acetylalanine modification.

The protein belongs to the MOZART1 family. In terms of assembly, associates with the gamma-tubulin ring complex (gTuRC) consisting of TUBGCP2, TUBGCP3, TUBGCP4, TUBGCP5 and TUBGCP6 and gamma-tubulin TUBG1 or TUBG2; within the complex, interacts with TUBGCP3 and TUBGCP6 to form a luminal bridge with actin that stabilizes the initial structure during complex assembly. Interacts with TUBG1.

It localises to the cytoplasm. The protein resides in the cytoskeleton. It is found in the microtubule organizing center. Its subcellular location is the centrosome. The protein localises to the spindle. Required for the recruitment and the assembly of the gamma-tubulin ring complex (gTuRC) at the centrosome. The gTuRC regulates the minus-end nucleation of alpha-beta tubulin heterodimers that grow into microtubule protafilaments, a critical step in centrosome duplication and spindle formation. This is Mitotic-spindle organizing protein 1 (MZT1) from Homo sapiens (Human).